A 222-amino-acid chain; its full sequence is Noggin (222 aa).

Positions 1–19 are cleaved as a signal peptide; that stretch reads MDHSQCLVTIYALMVFLGL. Asparagine 61 carries N-linked (GlcNAc...) asparagine glycosylation. Intrachain disulfides connect cysteine 145–cysteine 182, cysteine 168–cysteine 218, cysteine 174–cysteine 220, and cysteine 197–cysteine 205.

It belongs to the noggin family. In terms of assembly, homodimer.

The protein localises to the secreted. In terms of biological role, patterns the embryo by interrupting bone morphogenetic proteins (BMP) signaling. Binds BMP-4 and BMP-2 with high affinity. Can abolish BMP-4 activity by blocking binding to cognate cell-surface receptors. Capable of inducing dorsal development in embryos. Causes dorsal mesodermal differentiation of animal cap ectoderm when coexpressed with xWNT-8 and nuclear, sequence-specific DNA-binding protein xBRA. None of these molecules causes dorsal mesoderm formation when expressed alone. This is Noggin (nog) from Xenopus laevis (African clawed frog).